Here is a 164-residue protein sequence, read N- to C-terminus: Succinate dehydrogenase assembly factor 2, mitochondrial (164 aa).

The N-terminal 27 residues, 1–27 (MAVVTLIPTLARVLSKHSLLSPLLSVT), are a transit peptide targeting the mitochondrion.

The protein belongs to the SDHAF2 family. As to quaternary structure, interacts with SDHA within the SDH catalytic dimer.

It localises to the mitochondrion matrix. Its function is as follows. Plays an essential role in the assembly of succinate dehydrogenase (SDH), an enzyme complex (also referred to as respiratory complex II) that is a component of both the tricarboxylic acid (TCA) cycle and the mitochondrial electron transport chain, and which couples the oxidation of succinate to fumarate with the reduction of ubiquinone (coenzyme Q) to ubiquinol. Required for flavinylation (covalent attachment of FAD) of the flavoprotein subunit SDHA of the SDH catalytic dimer. The sequence is that of Succinate dehydrogenase assembly factor 2, mitochondrial from Rattus norvegicus (Rat).